Consider the following 801-residue polypeptide: MAEAHQASSLLSSLSSDGAEVELSSSVWQEIYLSALRSWKRNLWRVWNDFLAGVVPATPLSWLFLFSTIQLACLLQLDPSLGLMEKIKELLPDWGGQHHQLQGLLAAAVFASCLWGTLIFTLHVALRLLLSHHGWLLEPHGTMSSPTKTWLALVRIFSGRHPRLFSFQRALPRQPVPGAQETVRKYLESMRPVLRDDAFDSVVALANDFLRLQAPRLQLYLQLKSWCASNYVSDWWEEFVYLRSRGSLVNSTYYMMDFLYVTPTPLQAARAGNAVHTLLLYRHLLNRQEIPPTLLMGMRPLCSAQYERMFNTTRIPGVEKDYLCHLQDSQHVAVFHQGRFFRVGTHSSNGLLSPRALEQQFQYILDDPSPACPLEEHLAALTAAPRSMWAQVRESVKTHAATALETVEGAAFFVSLDSEPAGLTRENPAASLDTYAHTLLTGQGHDRWFDKSFTLIVFSNGKLGLSVEHSWADCPVAGHLWEFTLATECFQLGYATDGHCKGHPDPALPKPQRLQWDLPKQIQPSISLALRGAKTLSGNIDCHVFPFFHFGKSFIKGCHVSSDSFIQLVLQLAHFRDRGQFCLTYESAMTRLFLEGRTETVRSCTREACQFVRAMENKERTDQQCLALFREAVDKHQALLKAAMSGQGIDRHLFALYIMSRLLHMQSPFLTQVQSQQWLLSTSQIPVQQTHLFDVHNYPDYVSSGGGFGPAHDHGYGVSYIFMGENAISFHISSKQSSTETDSHRLGQHIEDALLDVASLFQAGQQFKRQFTGLGESSGWKYSNLSCKTVDPNIPKSSTNL.

Over 1-49 the chain is Cytoplasmic; that stretch reads MAEAHQASSLLSSLSSDGAEVELSSSVWQEIYLSALRSWKRNLWRVWND. Residues 50–70 traverse the membrane as a helical segment; that stretch reads FLAGVVPATPLSWLFLFSTIQ. The Mitochondrial intermembrane portion of the chain corresponds to 71 to 103; sequence LACLLQLDPSLGLMEKIKELLPDWGGQHHQLQG. Residues 104–124 form a helical membrane-spanning segment; the sequence is LLAAAVFASCLWGTLIFTLHV. At 125 to 801 the chain is on the cytoplasmic side; sequence ALRLLLSHHG…PNIPKSSTNL (677 aa). The active-site Proton acceptor is the H469. 551–563 serves as a coordination point for CoA; the sequence is GKSFIKGCHVSSD. Residues Y585, S587, and T598 each coordinate (R)-carnitine. The required for interaction with GRIA1 stretch occupies residues 760–801; sequence LFQAGQQFKRQFTGLGESSGWKYSNLSCKTVDPNIPKSSTNL.

This sequence belongs to the carnitine/choline acetyltransferase family. As to quaternary structure, peripherally associated with AMPAR complex. AMPAR complex consists of an inner core made of 4 pore-forming GluA/GRIA proteins (GRIA1, GRIA2, GRIA3 and GRIA4) and 4 major auxiliary subunits arranged in a twofold symmetry. One of the two pairs of distinct binding sites is occupied either by CNIH2, CNIH3 or CACNG2, CACNG3. The other harbors CACNG2, CACNG3, CACNG4, CACNG8 or GSG1L. This inner core of AMPAR complex is complemented by outer core constituents binding directly to the GluA/GRIA proteins at sites distinct from the interaction sites of the inner core constituents. Outer core constituents include at least PRRT1, PRRT2, CKAMP44/SHISA9, FRRS1L and NRN1. The proteins of the inner and outer core serve as a platform for other, more peripherally associated AMPAR constituents, including CPT1C. Alone or in combination, these auxiliary subunits control the gating and pharmacology of the AMPAR complex and profoundly impact their biogenesis and protein processing. Interacts with SACM1L; the interaction regulates SACM1L phosphatidylinositol-3-phosphatase activity and translocation to endoplasmic reticulum/trans Golgi network in a malonyl-CoA dependent manner. Interacts with ATL1. As to expression, expressed in brain (at protein level).

It localises to the synapse. The protein resides in the cell projection. It is found in the dendrite. Its subcellular location is the axon. The protein localises to the endoplasmic reticulum membrane. The enzyme catalyses S-hexadecanoyl-L-cysteinyl-[protein] + H2O = L-cysteinyl-[protein] + hexadecanoate + H(+). Palmitoyl thioesterase specifically expressed in the endoplasmic reticulum of neurons. Modulates the trafficking of the glutamate receptor, AMPAR, to plasma membrane through depalmitoylation of GRIA1. Also regulates AMPR trafficking through the regulation of SACM1L phosphatidylinositol-3-phosphatase activity by interaction in a malonyl-CoA dependent manner. Binds malonyl-CoA and couples malonyl-CoA to ceramide levels, necessary for proper spine maturation and contributing to systemic energy homeostasis and appetite control. Binds to palmitoyl-CoA, but does not have carnitine palmitoyltransferase 1 catalytic activity or at very low levels. The protein is Palmitoyl thioesterase CPT1C (Cpt1c) of Rattus norvegicus (Rat).